The chain runs to 214 residues: Transcriptional regulatory protein ComA (214 aa).

Positions 3–121 constitute a Response regulatory domain; the sequence is KILVIDDHPA…KITQYIYHVL (119 aa). The residue at position 55 (D55) is a 4-aspartylphosphate. The 66-residue stretch at 147–212 folds into the HTH luxR-type domain; sequence SQKEQDVLTP…EAVLIAKSDG (66 aa). The segment at residues 171-190 is a DNA-binding region (H-T-H motif); it reads NQEIADALHLSKRSIEYSLT.

Phosphorylated by ComP.

The protein resides in the cytoplasm. Response regulator in the two-component regulatory system ComP/ComA involved in a major quorum response pathway that regulates the development of genetic competence. Regulates directly the expression of over 20 genes, including genes of the srfA operon, degQ, rapA, rapC, rapE, rapF, etc. Regulates indirectly, through the regulation of comK transcription, the expression of late competence genes. In Bacillus subtilis (strain 168), this protein is Transcriptional regulatory protein ComA (comA).